The following is a 428-amino-acid chain: 3-phosphoshikimate 1-carboxyvinyltransferase (428 aa).

3 residues coordinate 3-phosphoshikimate: Lys22, Ser23, and Arg27. Residue Lys22 coordinates phosphoenolpyruvate. Phosphoenolpyruvate-binding residues include Gly94 and Arg122. Positions 168, 169, 170, 196, 315, and 342 each coordinate 3-phosphoshikimate. Phosphoenolpyruvate is bound at residue Gln170. Asp315 functions as the Proton acceptor in the catalytic mechanism. The phosphoenolpyruvate site is built by Arg346, Arg389, and Lys414.

It belongs to the EPSP synthase family. As to quaternary structure, monomer.

The protein resides in the cytoplasm. It catalyses the reaction 3-phosphoshikimate + phosphoenolpyruvate = 5-O-(1-carboxyvinyl)-3-phosphoshikimate + phosphate. It functions in the pathway metabolic intermediate biosynthesis; chorismate biosynthesis; chorismate from D-erythrose 4-phosphate and phosphoenolpyruvate: step 6/7. Its function is as follows. Catalyzes the transfer of the enolpyruvyl moiety of phosphoenolpyruvate (PEP) to the 5-hydroxyl of shikimate-3-phosphate (S3P) to produce enolpyruvyl shikimate-3-phosphate and inorganic phosphate. The sequence is that of 3-phosphoshikimate 1-carboxyvinyltransferase from Thiobacillus denitrificans (strain ATCC 25259 / T1).